Consider the following 293-residue polypeptide: UPF0282 protein MK0213 (293 aa).

This sequence belongs to the UPF0282 family.

The polypeptide is UPF0282 protein MK0213 (Methanopyrus kandleri (strain AV19 / DSM 6324 / JCM 9639 / NBRC 100938)).